Here is a 92-residue protein sequence, read N- to C-terminus: uncharacterized protein (92 aa).

Its function is as follows. Homolog of shope fibroma virus T4A ORF. This is an uncharacterized protein from Swinepox virus (strain Kasza) (SWPV).